Here is a 109-residue protein sequence, read N- to C-terminus: Larval cuticle protein 1 (109 aa).

An N-terminal signal peptide occupies residues 1–14; sequence MILVALALVALAVA. In terms of domain architecture, Chitin-binding type R&amp;R spans 34–107; the sequence is EGSYQFGFET…AEGSSIPKPA (74 aa).

In terms of biological role, component of the cuticle of the larva of Helicoverpa armigera. The sequence is that of Larval cuticle protein 1 (LCP1) from Helicoverpa armigera (Cotton bollworm).